Consider the following 741-residue polypeptide: Eukaryotic translation initiation factor 3 subunit B (741 aa).

Residues methionine 1–glutamate 10 are compositionally biased toward polar residues. The disordered stretch occupies residues methionine 1–isoleucine 21. The region spanning threonine 40 to aspartate 126 is the RRM domain. WD repeat units lie at residues alanine 193–glutamine 230, proline 232–valine 289, alanine 303–lysine 344, isoleucine 514–glutamate 557, and valine 572–alanine 610. The tract at residues aspartate 696–alanine 723 is disordered.

This sequence belongs to the eIF-3 subunit B family. As to quaternary structure, component of the eukaryotic translation initiation factor 3 (eIF-3) complex.

It is found in the cytoplasm. Its function is as follows. RNA-binding component of the eukaryotic translation initiation factor 3 (eIF-3) complex, which is involved in protein synthesis of a specialized repertoire of mRNAs and, together with other initiation factors, stimulates binding of mRNA and methionyl-tRNAi to the 40S ribosome. The eIF-3 complex specifically targets and initiates translation of a subset of mRNAs involved in cell proliferation. The chain is Eukaryotic translation initiation factor 3 subunit B (prt1) from Aspergillus oryzae (strain ATCC 42149 / RIB 40) (Yellow koji mold).